The primary structure comprises 272 residues: Insulin-like growth factor-binding protein 5 (272 aa).

The signal sequence occupies residues 1–20; sequence MVLLTAVLLLLAAYAGPAQS. The IGFBP N-terminal domain occupies 23-103; it reads SFVHCEPCDE…LHGRGVCLNE (81 aa). Disulfide bonds link Cys-27-Cys-53, Cys-30-Cys-55, Cys-38-Cys-56, Cys-45-Cys-59, Cys-67-Cys-80, and Cys-74-Cys-100. Over residues 111–122 the composition is skewed to basic and acidic residues; that stretch reads KIERDSREHEEP. The segment at 111 to 130 is disordered; that stretch reads KIERDSREHEEPTTSEMAEE. A Phosphoserine; by FAM20C modification is found at Ser-116. A glycan (O-linked (HexNAc...) threonine) is linked at Thr-172. One can recognise a Thyroglobulin type-1 domain in the interval 189 to 263; sequence QGPCRRHMEA…MEYVDGDFQC (75 aa). 3 disulfides stabilise this stretch: Cys-192–Cys-219, Cys-230–Cys-241, and Cys-243–Cys-263.

In terms of assembly, interacts with IGF1; this interaction enhances the growth stimulatory effects of IGF1 on fibroblasts. Interacts with CAV1; this interaction allows trafficking of IGFBP5 from the plasma membrane to the nucleus. Interacts with NCL; this interaction is necessary for IGFBP5 localization to the nucleus. Cleaved by C1S in extracellular space. As to expression, osteosarcoma, and at lower levels in liver, kidney and brain.

The protein localises to the secreted. Its subcellular location is the cytoplasm. The protein resides in the nucleus. Multifunctional protein that plays a critical role in regulating the availability of IGFs to their receptors and thereby regulates IGF-mediated cellular processes including proliferation, differentiation, and apoptosis in a cell-type specific manner. Increases the cell proliferation of osteoblasts, intestinal smooth muscle cells and neuroblastoma cells. Enhances adhesion and survival of epithelial cells but decreases adhesion of mesenchymal cells. Once secreted, acts as a major mediator of mTORC1-dependent feedback inhibition of IGF1 signaling. Also plays a role in the induction of extracellular matrix (ECM) production and deposition independently of its nuclear translocation and binding to IGFs. Acts itself as a growth factor that can act independently of IGFs to regulate bone formation. Acts as a ligand for the ROR1 receptor which triggers formation of ROR1/HER2 heterodimer to enhance CREB oncogenic signaling. This Homo sapiens (Human) protein is Insulin-like growth factor-binding protein 5 (IGFBP5).